Here is a 942-residue protein sequence, read N- to C-terminus: Small RNA 2'-O-methyltransferase (942 aa).

In terms of domain architecture, DRBM spans 19–87 (FGAKASYTVE…AELALDKLGI (69 aa)). The region spanning 93–204 (DLTVDEARDE…KNAYPSEIVE (112 aa)) is the HTH La-type RNA-binding domain. The segment covering 505-514 (EQSCDTDDDQ) has biased composition (acidic residues). Disordered stretches follow at residues 505–542 (EQSC…KNTN) and 571–596 (PEYS…EYSA). Residues Ser726, Asp745, 778–779 (SI), and Leu795 contribute to the S-adenosyl-L-methionine site. Mg(2+) contacts are provided by Glu796, Glu799, and His800. Positions 837–856 (RSTPETQEENNSEPQLPKFR) are disordered. Residue His860 coordinates Mg(2+).

The protein belongs to the methyltransferase superfamily. HEN1 family. In terms of assembly, binds small RNA duplexes as monomer. The cofactor is Mg(2+). Expressed in stems, leaves and inflorescences.

It is found in the nucleus. The enzyme catalyses small RNA 3'-end nucleotide + S-adenosyl-L-methionine = small RNA 3'-end 2'-O-methylnucleotide + S-adenosyl-L-homocysteine + H(+). Its function is as follows. Methyltransferase that adds a methyl group to the ribose of the last nucleotide of small RNAs (sRNAs). This protects the 3'-end of sRNAs from uridylation activity and subsequent degradation. Can methylate 3'-end of microRNAs (miRNAs), small interfering RNAs (siRNas) and trans-acting small interfering RNAs (ta-siRNAs). Involved in plant development through its role in small RNAs processing. Required for the specification of reproductive organ identities and the probable repression of A class genes. May control floral determinacy possibly by regulating the expression of the C class floral homeotic gene AGAMOUS (AG). The sequence is that of Small RNA 2'-O-methyltransferase (HEN1) from Arabidopsis thaliana (Mouse-ear cress).